The sequence spans 136 residues: Histone H3.3C (136 aa).

The tract at residues 1–44 (MARTKQTARKSTGGKAPRKQLVTKAARKSAPSTGGMKKPHRYRP) is disordered. Arg-3 is subject to Asymmetric dimethylarginine; by PRMT6; alternate. Arg-3 is subject to Citrulline; alternate. Position 4 is a phosphothreonine; by HASPIN (Thr-4). Lys-5 carries the allysine; alternate modification. Lys-5 bears the N6,N6,N6-trimethyllysine; alternate mark. Lys-5 is subject to N6,N6-dimethyllysine; alternate. Position 5 is an N6-(2-hydroxyisobutyryl)lysine; alternate (Lys-5). At Lys-5 the chain carries N6-(beta-hydroxybutyryl)lysine; alternate. Residue Lys-5 is modified to N6-acetyllysine; alternate. N6-methyllysine; alternate is present on Lys-5. Position 6 is a 5-glutamyl dopamine; alternate (Gln-6). Gln-6 carries the 5-glutamyl serotonin; alternate modification. A Phosphothreonine; by PKC modification is found at Thr-7. Arg-9 carries the symmetric dimethylarginine modification. Lys-10 bears the N6,N6,N6-trimethyllysine; alternate mark. Lys-10 is subject to N6,N6-dimethyllysine; alternate. N6-(2-hydroxyisobutyryl)lysine; alternate is present on Lys-10. Lys-10 carries the post-translational modification N6-(beta-hydroxybutyryl)lysine; alternate. The residue at position 10 (Lys-10) is an N6-acetyllysine; alternate. Residue Lys-10 is modified to N6-methyllysine; alternate. Lys-10 is modified (N6-lactoyllysine; alternate). Ser-11 bears the ADP-ribosylserine; alternate mark. Ser-11 carries the phosphoserine; alternate; by AURKB, AURKC, RPS6KA3, RPS6KA4 and RPS6KA5 modification. Thr-12 carries the post-translational modification Phosphothreonine; by PKC. Lys-15 is subject to N6-(2-hydroxyisobutyryl)lysine; alternate. Lys-15 bears the N6-(beta-hydroxybutyryl)lysine; alternate mark. An N6-acetyllysine; alternate modification is found at Lys-15. Lys-15 is modified (N6-lactoyllysine; alternate). The residue at position 15 (Lys-15) is an N6-glutaryllysine; alternate. The residue at position 15 (Lys-15) is an N6-succinyllysine; alternate. Arg-18 bears the Asymmetric dimethylarginine mark. An N6-(2-hydroxyisobutyryl)lysine; alternate mark is found at Lys-19 and Lys-24. N6-(beta-hydroxybutyryl)lysine; alternate occurs at positions 19 and 24. N6-acetyllysine; alternate occurs at positions 19 and 24. An N6-methyllysine; alternate mark is found at Lys-19 and Lys-24. 2 positions are modified to N6-lactoyllysine; alternate: Lys-19 and Lys-24. Residues Lys-19 and Lys-24 each carry the N6-glutaryllysine; alternate modification. An N6-butyryllysine; alternate mark is found at Lys-19 and Lys-24. The residue at position 27 (Arg-27) is a Citrulline. Lys-28 is modified (N6,N6,N6-trimethyllysine; alternate). Lys-28 carries the post-translational modification N6,N6-dimethyllysine; alternate. Residue Lys-28 is modified to N6-(2-hydroxyisobutyryl)lysine; alternate. Lys-28 is modified (N6-acetyllysine; alternate). Residue Lys-28 is modified to N6-methyllysine; alternate. The residue at position 28 (Lys-28) is an N6-lactoyllysine; alternate. At Lys-28 the chain carries N6-glutaryllysine; alternate. Residue Ser-29 is modified to ADP-ribosylserine; alternate. Ser-29 is modified (phosphoserine; alternate; by AURKB, AURKC and RPS6KA5). Ser-32 carries the phosphoserine modification. N6,N6,N6-trimethyllysine; alternate is present on Lys-37. An N6,N6-dimethyllysine; alternate modification is found at Lys-37. At Lys-37 the chain carries N6-(2-hydroxyisobutyryl)lysine; alternate. Lys-37 carries the N6-acetyllysine; alternate modification. Lys-37 bears the N6-methyllysine; alternate mark. Lys-38 is modified (N6-methyllysine). Tyr-42 carries the phosphotyrosine modification. Lys-57 is modified (N6,N6,N6-trimethyllysine; alternate). Position 57 is an N6-(2-hydroxyisobutyryl)lysine; alternate (Lys-57). Residue Lys-57 is modified to N6-(beta-hydroxybutyryl)lysine; alternate. Lys-57 bears the N6-acetyllysine; alternate mark. Lys-57 is subject to N6-methyllysine; alternate. Lys-57 carries the N6-lactoyllysine; alternate modification. Lys-57 carries the N6-glutaryllysine; alternate modification. Lys-57 is modified (N6-succinyllysine; alternate). Residue Ser-58 is modified to Phosphoserine. Residues Lys-65 and Lys-80 each carry the N6-(2-hydroxyisobutyryl)lysine; alternate modification. An N6-methyllysine; alternate mark is found at Lys-65 and Lys-80. Lys-80 carries the post-translational modification N6,N6,N6-trimethyllysine; alternate. Lys-80 carries the post-translational modification N6,N6-dimethyllysine; alternate. Residue Lys-80 is modified to N6-acetyllysine; alternate. Lys-80 carries the N6-lactoyllysine; alternate modification. Lys-80 is subject to N6-glutaryllysine; alternate. At Lys-80 the chain carries N6-succinyllysine; alternate. At Thr-81 the chain carries Phosphothreonine. At Ser-87 the chain carries Phosphoserine. Thr-108 carries the phosphothreonine modification. Lys-116 carries the N6-acetyllysine; alternate modification. Lys-116 carries the post-translational modification N6-glutaryllysine; alternate.

Belongs to the histone H3 family. The nucleosome is a histone octamer containing two molecules each of H2A, H2B, H3 and H4 assembled in one H3-H4 heterotetramer and two H2A-H2B heterodimers. The octamer wraps approximately 147 bp of DNA. In terms of processing, acetylation is generally linked to gene activation. Acetylation on Lys-19 (H3K18ac) favors methylation at Arg-18 (H3R17me). Citrullination at Arg-18 by PADI4 impairs methylation and represses transcription. Post-translationally, asymmetric dimethylation at Arg-18 (H3R17me2a) by CARM1 is linked to gene activation. Asymmetric dimethylation at Arg-3 (H3R2me2a) by PRMT6 is linked to gene repression and is mutually exclusive with H3 Lys-5 methylation (H3K4me2 and H3K4me3). H3R2me2a is present at the 3' of genes regardless of their transcription state and is enriched on inactive promoters, while it is absent on active promoters. In terms of processing, methylation at Lys-5 (H3K4me) and Lys-80 (H3K79me) are linked to gene activation. Methylation at Lys-5 (H3K4me) facilitates subsequent acetylation of H3 and H4. Methylation at Lys-80 (H3K79me) is associated with DNA double-strand break (DSB) responses and is a specific target for TP53BP1. Methylation at Lys-10 (H3K9me) and Lys-28 (H3K27me) are linked to gene repression. Methylation at Lys-10 (H3K9me) is a specific target for HP1 proteins (CBX1, CBX3 and CBX5) and prevents subsequent phosphorylation at Ser-11 (H3S10ph) and acetylation of H3 and H4. Methylation at Lys-5 (H3K4me) and Lys-80 (H3K79me) require preliminary monoubiquitination of H2B at 'Lys-120'. Methylation at Lys-10 (H3K9me) and Lys-28 (H3K27me) are enriched in inactive X chromosome chromatin. Monomethylation at Lys-57 (H3K56me1) by EHMT2/G9A in G1 phase promotes interaction with PCNA and is required for DNA replication. Phosphorylated at Thr-4 (H3T3ph) by HASPIN during prophase and dephosphorylated during anaphase. Phosphorylation at Ser-11 (H3S10ph) by AURKB is crucial for chromosome condensation and cell-cycle progression during mitosis and meiosis. In addition phosphorylation at Ser-11 (H3S10ph) by RPS6KA4 and RPS6KA5 is important during interphase because it enables the transcription of genes following external stimulation, like mitogens, stress, growth factors or UV irradiation and result in the activation of genes, such as c-fos and c-jun. Phosphorylation at Ser-11 (H3S10ph), which is linked to gene activation, prevents methylation at Lys-10 (H3K9me) but facilitates acetylation of H3 and H4. Phosphorylation at Ser-11 (H3S10ph) by AURKB mediates the dissociation of HP1 proteins (CBX1, CBX3 and CBX5) from heterochromatin. Phosphorylation at Ser-11 (H3S10ph) is also an essential regulatory mechanism for neoplastic cell transformation. Phosphorylated at Ser-29 (H3S28ph) by MAP3K20 isoform 1, RPS6KA5 or AURKB during mitosis or upon ultraviolet B irradiation. Phosphorylation at Thr-7 (H3T6ph) by PRKCB is a specific tag for epigenetic transcriptional activation that prevents demethylation of Lys-5 (H3K4me) by LSD1/KDM1A. At centromeres, specifically phosphorylated at Thr-12 (H3T11ph) from prophase to early anaphase, by DAPK3 and PKN1. Phosphorylation at Thr-12 (H3T11ph) by PKN1 or isoform M2 of PKM (PKM2) is a specific tag for epigenetic transcriptional activation that promotes demethylation of Lys-10 (H3K9me) by KDM4C/JMJD2C. Phosphorylation at Tyr-42 (H3Y41ph) by JAK2 promotes exclusion of CBX5 (HP1 alpha) from chromatin. Post-translationally, lysine deamination at Lys-5 (H3K4all) to form allysine is mediated by LOXL2. Allysine formation by LOXL2 only takes place on H3K4me3 and results in gene repression. In terms of processing, butyrylation of histones marks active promoters and competes with histone acetylation. It is present during late spermatogenesis. Succinylation at Lys-80 (H3K79succ) by KAT2A takes place with a maximum frequency around the transcription start sites of genes. It gives a specific tag for epigenetic transcription activation. Post-translationally, serine ADP-ribosylation constitutes the primary form of ADP-ribosylation of proteins in response to DNA damage. Serine ADP-ribosylation at Ser-11 (H3S10ADPr) is mutually exclusive with phosphorylation at Ser-11 (H3S10ph) and impairs acetylation at Lys-10 (H3K9ac).

The protein localises to the nucleus. Its subcellular location is the chromosome. Its function is as follows. Core component of nucleosome. Nucleosomes wrap and compact DNA into chromatin, limiting DNA accessibility to the cellular machineries which require DNA as a template. Histones thereby play a central role in transcription regulation, DNA repair, DNA replication and chromosomal stability. DNA accessibility is regulated via a complex set of post-translational modifications of histones, also called histone code, and nucleosome remodeling. In Bos taurus (Bovine), this protein is Histone H3.3C.